The sequence spans 523 residues: MKRSHQETSVEEEAPSMVEKLENGCGGGGDDNMDEFLAVLGYKVRSSDMADVAQKLEQLEMVLSNDIASSSNAFNDTVHYNPSDLSGWAQSMLSDLNYYPDLDPNRICDLRPITDDDECCSSNSNSNKRIRLGPWCDSVTSESTRSVVLIEETGVRLVQALVACAEAVQLENLSLADALVKRVGLLAASQAGAMGKVATYFAEALARRIYRIHPSAAAIDPSFEEILQMNFYDSCPYLKFAHFTANQAILEAVTTSRVVHVIDLGLNQGMQWPALMQALALRPGGPPSFRLTGVGNPSNREGIQELGWKLAQLAQAIGVEFKFNGLTTERLSDLEPDMFETRTESETLVVNSVFELHPVLSQPGSIEKLLATVKAVKPGLVTVVEQEANHNGDVFLDRFNEALHYYSSLFDSLEDGVVIPSQDRVMSEVYLGRQILNLVATEGSDRIERHETLAQWRKRMGSAGFDPVNLGSDAFKQASLLLALSGGGDGYRVEENDGSLMLAWQTKPLIAASAWKLAAELRR.

The segment at 1–28 (MKRSHQETSVEEEAPSMVEKLENGCGGG) is disordered. The DELLA motif signature appears at 34–38 (DEFLA). The short motif at 56–60 (LEQLE) is the LEXLE motif element. The short motif at 78–82 (VHYNP) is the VHYNP motif element. A GRAS domain is found at 148–516 (VLIEETGVRL…KPLIAASAWK (369 aa)). The tract at residues 155-209 (VRLVQALVACAEAVQLENLSLADALVKRVGLLAASQAGAMGKVATYFAEALARRI) is leucine repeat I (LRI). Positions 228–293 (QMNFYDSCPY…GGPPSFRLTG (66 aa)) are VHIID. Residues 259–263 (VHVID) carry the VHIID motif. The tract at residues 305 to 337 (ELGWKLAQLAQAIGVEFKFNGLTTERLSDLEPD) is leucine repeat II (LRII). A PFYRE region spans residues 348-437 (LVVNSVFELH…EVYLGRQILN (90 aa)). An LXXLL motif motif is present at residues 356 to 360 (LHPVL). Positions 440–516 (ATEGSDRIER…KPLIAASAWK (77 aa)) are SAW.

Belongs to the GRAS family. DELLA subfamily. Interacts directly with the GID2/SLY1 component of the SCF(GID2) complex, suggesting that it may be ubiquitinated. Interacts (via N-terminus) with GID1A, GID1B and GID1B (via N-terminus). Interacts with the BOI proteins BOI, BRG1, BRG2 and BRG3. Phosphorylated. In terms of processing, may be ubiquitinated. Expressed at very low level. Mainly expressed in germinating seeds and flowers and siliques. Not expressed in other tissues.

The protein resides in the nucleus. Probable transcriptional regulator that acts as a repressor of the gibberellin (GA) signaling pathway. No effect of the BOI proteins on its stability. Probably acts by participating in large multiprotein complexes that repress transcription of GA-inducible genes. Its activity may be regulated by phytohormones such as auxin and ethylene. This chain is DELLA protein RGL3 (RGL3), found in Arabidopsis thaliana (Mouse-ear cress).